A 421-amino-acid chain; its full sequence is Acyl-coenzyme A thioesterase 6 (421 aa).

Residues Ser-232, Asp-326, and His-360 each act as charge relay system in the active site. The Peroxisome targeting signal motif lies at 419–421 (SKI).

This sequence belongs to the C/M/P thioester hydrolase family.

The protein localises to the peroxisome. Its subcellular location is the cytoplasm. The catalysed reaction is pristanoyl-CoA + H2O = 2,6,10,14-tetramethylpentadecanoate + CoA + H(+). The enzyme catalyses phytanoyl-CoA + H2O = 3,7,11,15-tetramethylhexadecanoate + CoA + H(+). Its pathway is lipid metabolism; fatty acid metabolism. Functionally, catalyzes the hydrolysis of acyl-CoAs into free fatty acids and coenzyme A (CoASH), regulating their respective intracellular levels. Catalyzes the hydrolysis of phytanoyl-CoA and pristanoyl-CoA, two methyl-branched fatty acids derived from phytol, that enter the body via the diet. The polypeptide is Acyl-coenzyme A thioesterase 6 (Homo sapiens (Human)).